The chain runs to 290 residues: Arylamine N-acetyltransferase, pineal gland isozyme NAT-3 (290 aa).

The active-site Acyl-thioester intermediate is the Cys68. Residues His107 and Asp122 contribute to the active site.

It belongs to the arylamine N-acetyltransferase family.

The enzyme catalyses an arylamine + acetyl-CoA = an N-acetylarylamine + CoA. It carries out the reaction an N-hydroxyarylamine + acetyl-CoA = an N-acetoxyarylamine + CoA. Catalyzes the N- or O-acetylation of various arylamine and heterocyclic amine substrates, and participates in the detoxification of a plethora of hydrazine and arylamine drugs. The chain is Arylamine N-acetyltransferase, pineal gland isozyme NAT-3 from Gallus gallus (Chicken).